The sequence spans 98 residues: Large ribosomal subunit protein uL23 (98 aa).

The protein belongs to the universal ribosomal protein uL23 family. Part of the 50S ribosomal subunit. Contacts protein L29, and trigger factor when it is bound to the ribosome.

Functionally, one of the early assembly proteins it binds 23S rRNA. One of the proteins that surrounds the polypeptide exit tunnel on the outside of the ribosome. Forms the main docking site for trigger factor binding to the ribosome. This is Large ribosomal subunit protein uL23 from Teredinibacter turnerae (strain ATCC 39867 / T7901).